The sequence spans 430 residues: Trigger factor (430 aa).

Positions 157 to 242 (GDLVALETWS…AVEVSEPVLP (86 aa)) constitute a PPIase FKBP-type domain.

Belongs to the FKBP-type PPIase family. Tig subfamily.

It is found in the cytoplasm. The enzyme catalyses [protein]-peptidylproline (omega=180) = [protein]-peptidylproline (omega=0). Involved in protein export. Acts as a chaperone by maintaining the newly synthesized protein in an open conformation. Functions as a peptidyl-prolyl cis-trans isomerase. This chain is Trigger factor, found in Xanthomonas campestris pv. campestris (strain ATCC 33913 / DSM 3586 / NCPPB 528 / LMG 568 / P 25).